The sequence spans 147 residues: uncharacterized protein (147 aa).

Residues 1-21 (MRTIFVGVLLLAIMGEGRLCA) form the signal peptide.

This is an uncharacterized protein from Treponema pallidum (strain Nichols).